Consider the following 396-residue polypeptide: Mannonate dehydratase (396 aa).

This sequence belongs to the mannonate dehydratase family. Fe(2+) serves as cofactor. Mn(2+) is required as a cofactor.

It catalyses the reaction D-mannonate = 2-dehydro-3-deoxy-D-gluconate + H2O. It functions in the pathway carbohydrate metabolism; pentose and glucuronate interconversion. Catalyzes the dehydration of D-mannonate. This chain is Mannonate dehydratase, found in Yersinia enterocolitica serotype O:8 / biotype 1B (strain NCTC 13174 / 8081).